The following is a 178-amino-acid chain: Nucleoplasmin-3 (178 aa).

An N-acetylalanine modification is found at alanine 2. Phosphoserine is present on residues serine 13 and serine 16. Omega-N-methylarginine is present on arginine 27. A disordered region spans residues threonine 141 to proline 178. A compositionally biased stretch (acidic residues) spans valine 146–glutamate 164. Phosphoserine is present on residues serine 147, serine 151, and serine 158.

This sequence belongs to the nucleoplasmin family. Interacts with NPM (via N-terminus). Forms a pentamer with NPM at a ratio 4:1 (NPM3/NPM). Two pentamers form a decamer. In terms of processing, phosphorylated. Ubiquitous.

The protein localises to the nucleus. It is found in the nucleolus. In terms of biological role, plays a role in the regulation of diverse cellular processes such as ribosome biogenesis, chromatin remodeling or protein chaperoning. Modulates the histone chaperone function and the RNA-binding activity of nucleolar phosphoprotein B23/NPM. Efficiently mediates chromatin remodeling when included in a pentamer containing NPM3 and NPM. In Homo sapiens (Human), this protein is Nucleoplasmin-3 (NPM3).